The following is a 378-amino-acid chain: Cysteine endopeptidase RepA (378 aa).

Residues 1–24 (MLRCFLVAAAAVALAAAAAAPARA) form the signal peptide. A propeptide spans 25 to 141 (IPFTESDLSS…SFRYGGDDED (117 aa)) (activation peptide). 3 disulfide bridges follow: cysteine 164–cysteine 206, cysteine 198–cysteine 239, and cysteine 297–cysteine 350. Cysteine 167 is a catalytic residue. Residues histidine 303 and asparagine 324 contribute to the active site.

Belongs to the peptidase C1 family.

Its subcellular location is the protein storage vacuole. Cysteine endopeptidase that digests in vitro both the acidic and basic subunits of glutelin, the major seed storage protein of rice. This chain is Cysteine endopeptidase RepA, found in Oryza sativa subsp. japonica (Rice).